We begin with the raw amino-acid sequence, 294 residues long: 4-hydroxy-tetrahydrodipicolinate synthase (294 aa).

Residue Thr47 coordinates pyruvate. Tyr135 serves as the catalytic Proton donor/acceptor. The Schiff-base intermediate with substrate role is filled by Lys163. Pyruvate is bound at residue Ile206.

This sequence belongs to the DapA family. Homodimer.

It localises to the cytoplasm. It carries out the reaction L-aspartate 4-semialdehyde + pyruvate = (2S,4S)-4-hydroxy-2,3,4,5-tetrahydrodipicolinate + H2O + H(+). It participates in amino-acid biosynthesis; L-lysine biosynthesis via DAP pathway; (S)-tetrahydrodipicolinate from L-aspartate: step 3/4. Functionally, catalyzes the condensation of (S)-aspartate-beta-semialdehyde [(S)-ASA] and pyruvate to 4-hydroxy-tetrahydrodipicolinate (HTPA). The protein is 4-hydroxy-tetrahydrodipicolinate synthase of Staphylococcus haemolyticus (strain JCSC1435).